A 388-amino-acid polypeptide reads, in one-letter code: Beta-hexosaminidase LpqI (388 aa).

Residues 1 to 19 (MAFPRTLAILAAAAALVVA) form the signal peptide. Cysteine 20 carries the N-palmitoyl cysteine lipid modification. Cysteine 20 carries S-diacylglycerol cysteine lipidation. Substrate is bound by residues aspartate 123, arginine 131, arginine 193, and 223 to 224 (KH). The Proton donor/acceptor role is filled by histidine 236. Aspartate 311 (nucleophile) is an active-site residue.

The protein belongs to the glycosyl hydrolase 3 family.

Its subcellular location is the cell inner membrane. The enzyme catalyses Hydrolysis of terminal non-reducing N-acetyl-D-hexosamine residues in N-acetyl-beta-D-hexosaminides.. Its pathway is cell wall biogenesis; peptidoglycan recycling. Its function is as follows. Plays a role in peptidoglycan recycling by cleaving the terminal beta-1,4-linked N-acetylglucosamine (GlcNAc) from peptidoglycan fragments. Acts as a regulator for GlcNAc-MurNAc levels by cleaving disaccharides and allowing the breakdown of MurNAc. The polypeptide is Beta-hexosaminidase LpqI (Mycobacterium tuberculosis (strain ATCC 25618 / H37Rv)).